Here is a 397-residue protein sequence, read N- to C-terminus: Serine/threonine-protein kinase 17A (397 aa).

A disordered region spans residues 1–23; sequence MIPLEKPGSGGSPSAAASGSGPG. Phosphoserine is present on Ser-9. The Protein kinase domain occupies 44 to 304; the sequence is LSPGRELGRG…AEECLKHPWL (261 aa). ATP is bound by residues 50–58 and Lys-73; that span reads LGRGKFAVV. The active-site Proton acceptor is the Asp-169.

It belongs to the protein kinase superfamily. CAMK Ser/Thr protein kinase family. DAP kinase subfamily. Post-translationally, autophosphorylated. As to expression, highly expressed in bone marrow. Lower levels in brain, heart, lung, liver and kidney.

Its subcellular location is the nucleus. It catalyses the reaction L-seryl-[protein] + ATP = O-phospho-L-seryl-[protein] + ADP + H(+). It carries out the reaction L-threonyl-[protein] + ATP = O-phospho-L-threonyl-[protein] + ADP + H(+). Its activity is regulated as follows. Inhibited by thiazolidinedione-type compounds: inhibited by furan- and pyridone- thiazolidinediones. Its function is as follows. Acts as a positive regulator of apoptosis. May also act as a regulator of cellular reactive oxygen species. This chain is Serine/threonine-protein kinase 17A (STK17A), found in Oryctolagus cuniculus (Rabbit).